Reading from the N-terminus, the 147-residue chain is Hemoglobin subunit gamma (147 aa).

Residues 3-147 (NFTAEDKAAI…VASALGSRYH (145 aa)) form the Globin domain. 2 residues coordinate heme b: histidine 64 and histidine 93.

This sequence belongs to the globin family. As to quaternary structure, heterotetramer of two alpha chains and two gamma chains in fetal hemoglobin (Hb F). Red blood cells.

Functionally, gamma chains make up the fetal hemoglobin F, in combination with alpha chains. The protein is Hemoglobin subunit gamma (HBG) of Aotus azarae (Azara's night monkey).